A 366-amino-acid polypeptide reads, in one-letter code: Protein U1 (366 aa).

It belongs to the herpesviridae US22 family.

The polypeptide is Protein U1 (U1) (Human herpesvirus 6A (strain Uganda-1102) (HHV-6 variant A)).